The sequence spans 299 residues: MPIIIPQDLPARRILDAESVFTLGDADARRQDIRALQVVVLNLMPTKVTTETQIARVLANTPLQVELTLIHTASYQPTHTDPEHLRNFYSTFDQIRDRQFDGLIVTGAPVETLPWLAVDYWSELTTILDWSREAVRSSLFICWGAQAALQHFHGIEKQTLPAKRFGVFWHHLRDRSSPLVRGHDDDFLVPVSRHTEVIAAEVLAQSQLQILAESSEAGLHLLWDADQHRTYLFNHPEYDADTLDREYRRDREKGLPIQLPLNYYPNDDPNQVPRVRWRSHAQLLYTNWLNYEVYQPLSR.

Cys-142 acts as the Acyl-thioester intermediate in catalysis. Substrate is bound by residues Lys-163 and Ser-192. His-235 serves as the catalytic Proton acceptor. Glu-237 is an active-site residue. Position 249 (Arg-249) interacts with substrate.

This sequence belongs to the MetA family.

It localises to the cytoplasm. The enzyme catalyses L-homoserine + acetyl-CoA = O-acetyl-L-homoserine + CoA. It participates in amino-acid biosynthesis; L-methionine biosynthesis via de novo pathway; O-acetyl-L-homoserine from L-homoserine: step 1/1. In terms of biological role, transfers an acetyl group from acetyl-CoA to L-homoserine, forming acetyl-L-homoserine. The sequence is that of Homoserine O-acetyltransferase from Synechococcus elongatus (strain ATCC 33912 / PCC 7942 / FACHB-805) (Anacystis nidulans R2).